We begin with the raw amino-acid sequence, 307 residues long: NAD kinase 1 (307 aa).

Asp67 acts as the Proton acceptor in catalysis. NAD(+) is bound by residues 67–68 (DG), 149–150 (ND), Arg179, and Asp181.

Belongs to the NAD kinase family. Requires a divalent metal cation as cofactor.

Its subcellular location is the cytoplasm. The enzyme catalyses NAD(+) + ATP = ADP + NADP(+) + H(+). In terms of biological role, involved in the regulation of the intracellular balance of NAD and NADP, and is a key enzyme in the biosynthesis of NADP. Catalyzes specifically the phosphorylation on 2'-hydroxyl of the adenosine moiety of NAD to yield NADP. The protein is NAD kinase 1 of Prochlorococcus marinus (strain SARG / CCMP1375 / SS120).